The following is a 496-amino-acid chain: Guanosine-5'-triphosphate,3'-diphosphate pyrophosphatase (496 aa).

Belongs to the GppA/Ppx family. GppA subfamily.

The enzyme catalyses guanosine 3'-diphosphate 5'-triphosphate + H2O = guanosine 3',5'-bis(diphosphate) + phosphate + H(+). It functions in the pathway purine metabolism; ppGpp biosynthesis; ppGpp from GTP: step 2/2. Its function is as follows. Catalyzes the conversion of pppGpp to ppGpp. Guanosine pentaphosphate (pppGpp) is a cytoplasmic signaling molecule which together with ppGpp controls the 'stringent response', an adaptive process that allows bacteria to respond to amino acid starvation, resulting in the coordinated regulation of numerous cellular activities. This chain is Guanosine-5'-triphosphate,3'-diphosphate pyrophosphatase, found in Aeromonas hydrophila subsp. hydrophila (strain ATCC 7966 / DSM 30187 / BCRC 13018 / CCUG 14551 / JCM 1027 / KCTC 2358 / NCIMB 9240 / NCTC 8049).